The chain runs to 146 residues: Lysozyme-like protein 4 (146 aa).

The N-terminal stretch at 1–19 is a signal peptide; that stretch reads MKASVVLSLLGYLVVPSGA. The 127-residue stretch at 20–146 folds into the C-type lysozyme domain; sequence YILGRCTVAK…LARWLDGCKL (127 aa). 4 cysteine pairs are disulfide-bonded: C25–C144, C49–C131, C84–C96, and C92–C110. E54 is a catalytic residue.

It belongs to the glycosyl hydrolase 22 family. As to quaternary structure, monomer. As to expression, expressed in testis and epididymis.

The protein resides in the secreted. It localises to the cytoplasmic vesicle. Its subcellular location is the secretory vesicle. The protein localises to the acrosome. It is found in the cell projection. The protein resides in the cilium. It localises to the flagellum. Functionally, may be involved in fertilization. Has no detectable bacteriolytic and lysozyme activities in vitro. This chain is Lysozyme-like protein 4 (LYZL4), found in Homo sapiens (Human).